The chain runs to 234 residues: UPF0173 metal-dependent hydrolase Rleg2_1519 (234 aa).

It belongs to the UPF0173 family.

This Rhizobium leguminosarum bv. trifolii (strain WSM2304) protein is UPF0173 metal-dependent hydrolase Rleg2_1519.